The chain runs to 70 residues: Small ribosomal subunit protein bS21 (70 aa).

The protein belongs to the bacterial ribosomal protein bS21 family.

This Chromobacterium violaceum (strain ATCC 12472 / DSM 30191 / JCM 1249 / CCUG 213 / NBRC 12614 / NCIMB 9131 / NCTC 9757 / MK) protein is Small ribosomal subunit protein bS21.